We begin with the raw amino-acid sequence, 203 residues long: MSEILELEAKSRTEFGTGAARALRREGRVPAIIYGAGKIPISISLEEKEITKYYRRPAFISQLINLTIDKKQYKVLPKAVELHPVTDIVRHVDFVFLEAKTQKMEVPVVYEGKERALGVKRGGYFNIIKRRVILLCDINNIPRNVTIDVTNMPIGTSLKSSEVKLPIGCSFVTKKEFVLATIIGRKGVKTEIEGEQQVAGAMQ.

Belongs to the bacterial ribosomal protein bL25 family. CTC subfamily. Part of the 50S ribosomal subunit; part of the 5S rRNA/L5/L18/L25 subcomplex. Contacts the 5S rRNA. Binds to the 5S rRNA independently of L5 and L18.

Functionally, this is one of the proteins that binds to the 5S RNA in the ribosome where it forms part of the central protuberance. The chain is Large ribosomal subunit protein bL25 from Rickettsia typhi (strain ATCC VR-144 / Wilmington).